The sequence spans 235 residues: Orotidine 5'-phosphate decarboxylase (235 aa).

Substrate is bound by residues aspartate 17, lysine 39, 66–75 (DLKLHDIGNT), threonine 121, arginine 182, glutamine 191, glycine 211, and arginine 212. Lysine 68 acts as the Proton donor in catalysis.

The protein belongs to the OMP decarboxylase family. Type 1 subfamily. Homodimer.

The enzyme catalyses orotidine 5'-phosphate + H(+) = UMP + CO2. It participates in pyrimidine metabolism; UMP biosynthesis via de novo pathway; UMP from orotate: step 2/2. Its function is as follows. Catalyzes the decarboxylation of orotidine 5'-monophosphate (OMP) to uridine 5'-monophosphate (UMP). The protein is Orotidine 5'-phosphate decarboxylase of Rhodopseudomonas palustris (strain BisB5).